The following is a 442-amino-acid chain: Transcriptional coactivator YAP1 (442 aa).

Phosphoserine; by LATS1 and LATS2 occurs at positions 21, 69, and 87. 2 disordered regions span residues 51–89 and 97–116; these read LPDS…HSSP and VSPG…QHLR. Phosphoserine; by LATS1 and LATS2 is present on Ser119. 2 WW domains span residues 126–159 and 186–219; these read MPLP…DPRK and GPLP…DPRL. Positions 230–254 are disordered; that stretch reads ISQSAPVKQGSQLPSSPQSGVMSGN. Residues 238–249 are compositionally biased toward low complexity; sequence QGSQLPSSPQSG. The tract at residues 247 to 442 is transactivation domain; sequence QSGVMSGNNP…IDKENFLTWL (196 aa). Residues 258–279 adopt a coiled-coil conformation; sequence RLQQIHIEKERLRIKQELLRQR. The segment at 286–374 is disordered; it reads RNQLPTSMEQ…DTLGPGSMAT (89 aa). 3 stretches are compositionally biased toward polar residues: residues 288 to 304, 313 to 329, and 337 to 347; these read QLPT…NPVS, RNMT…SGTY, and DSGLSMSSYSV.

The protein belongs to the YAP1 family. Phosphorylated by lats1 and lats2; leading to cytoplasmic translocation and inactivation. As to expression, expressed in the notochord, brain, eyes, branchial arches and pectoral fins.

Its subcellular location is the cytoplasm. It localises to the nucleus. The protein localises to the cell junction. It is found in the tight junction. The protein resides in the cell membrane. Transcriptional regulator which can act both as a coactivator and a corepressor and is the critical downstream regulatory target in the Hippo signaling pathway that plays a pivotal role in organ size control and tumor suppression by restricting proliferation and promoting apoptosis. Required for expansion of the neural plate and neural plate border zone progenitor pools. Acts as a direct regulator of pax3 expression via interaction with tead1. Plays a key role in tissue tension and 3D tissue shape by regulating cortical actomyosin network formation. This chain is Transcriptional coactivator YAP1 (yap1), found in Danio rerio (Zebrafish).